The following is a 412-amino-acid chain: Mast cell carboxypeptidase A (412 aa).

An N-terminal signal peptide occupies residues 1 to 10 (LMGVIYSTLA). Residues 11 to 104 (IAPVQFDREK…IDKQFDVKEE (94 aa)) constitute a propeptide, activation peptide. In terms of domain architecture, Peptidase M14 spans 113-407 (KYNDWNKIVS…LSVKFIAKYI (295 aa)). Cystine bridges form between Cys168–Cys181 and Cys240–Cys263. Zn(2+) contacts are provided by His171 and Glu174. His299 serves as a coordination point for Zn(2+). Residue Glu373 is the Proton donor/acceptor of the active site.

The protein belongs to the peptidase M14 family. The cofactor is Zn(2+).

The protein localises to the cytoplasmic vesicle. Its subcellular location is the secretory vesicle. The catalysed reaction is Release of a C-terminal amino acid, but little or no action with -Asp, -Glu, -Arg, -Lys or -Pro.. The polypeptide is Mast cell carboxypeptidase A (Cpa3) (Rattus norvegicus (Rat)).